The primary structure comprises 436 residues: Immediate-early phosphoprotein 57 (436 aa).

Residues 71 to 140 are disordered; the sequence is VPKRERSKTP…TPSNQNPLTE (70 aa). A compositionally biased stretch (low complexity) spans 104–119; the sequence is QRPAPSARSRRPQPYS. Positions 127-138 are enriched in polar residues; sequence KPQSTPSNQNPL.

Belongs to the herpesviridae UL69 family.

It localises to the host nucleus. It is found in the host cytoplasm. In terms of biological role, acts at a post-transcriptional level to regulate viral gene expression. The protein is Immediate-early phosphoprotein 57 (57) of Alcelaphine herpesvirus 1 (strain C500) (AlHV-1).